The following is a 390-amino-acid chain: Chorismate synthase (390 aa).

NADP(+) is bound by residues Arg-39 and Arg-45. FMN is bound by residues 132 to 134 (RSS), 253 to 254 (NA), Gly-298, 313 to 317 (KPIPT), and Arg-339.

Belongs to the chorismate synthase family. As to quaternary structure, homotetramer. It depends on FMNH2 as a cofactor.

The enzyme catalyses 5-O-(1-carboxyvinyl)-3-phosphoshikimate = chorismate + phosphate. It functions in the pathway metabolic intermediate biosynthesis; chorismate biosynthesis; chorismate from D-erythrose 4-phosphate and phosphoenolpyruvate: step 7/7. Functionally, catalyzes the anti-1,4-elimination of the C-3 phosphate and the C-6 proR hydrogen from 5-enolpyruvylshikimate-3-phosphate (EPSP) to yield chorismate, which is the branch point compound that serves as the starting substrate for the three terminal pathways of aromatic amino acid biosynthesis. This reaction introduces a second double bond into the aromatic ring system. The polypeptide is Chorismate synthase (Bacillus licheniformis (strain ATCC 14580 / DSM 13 / JCM 2505 / CCUG 7422 / NBRC 12200 / NCIMB 9375 / NCTC 10341 / NRRL NRS-1264 / Gibson 46)).